Consider the following 467-residue polypeptide: Cysteine--tRNA ligase (467 aa).

C30 contributes to the Zn(2+) binding site. A 'HIGH' region motif is present at residues 32-42; it reads PTVYDDSHLGH. The Zn(2+) site is built by C209, H239, and E243. The short motif at 271 to 275 is the 'KMSKS' region element; sequence KMSKS. K274 contributes to the ATP binding site.

This sequence belongs to the class-I aminoacyl-tRNA synthetase family. As to quaternary structure, monomer. Zn(2+) is required as a cofactor.

It is found in the cytoplasm. The enzyme catalyses tRNA(Cys) + L-cysteine + ATP = L-cysteinyl-tRNA(Cys) + AMP + diphosphate. The chain is Cysteine--tRNA ligase from Aliarcobacter butzleri (strain RM4018) (Arcobacter butzleri).